We begin with the raw amino-acid sequence, 166 residues long: Lipoprotein signal peptidase (166 aa).

4 helical membrane-spanning segments follow: residues 9 to 29 (ASGALAPWLGISLIVILFDQL), 45 to 65 (ALTSFFNLVLVYNRGAAFGFL), 71 to 91 (WQRWAFTALGVGATLVICFLL), and 100 to 120 (FSVSLALILGGALGNVIDRLV). Residues D126 and D144 contribute to the active site. The chain crosses the membrane as a helical span at residues 135-155 (WHFPAFNLADSAITVGAVLLI).

Belongs to the peptidase A8 family.

Its subcellular location is the cell inner membrane. The enzyme catalyses Release of signal peptides from bacterial membrane prolipoproteins. Hydrolyzes -Xaa-Yaa-Zaa-|-(S,diacylglyceryl)Cys-, in which Xaa is hydrophobic (preferably Leu), and Yaa (Ala or Ser) and Zaa (Gly or Ala) have small, neutral side chains.. It participates in protein modification; lipoprotein biosynthesis (signal peptide cleavage). In terms of biological role, this protein specifically catalyzes the removal of signal peptides from prolipoproteins. The sequence is that of Lipoprotein signal peptidase from Burkholderia cenocepacia (strain HI2424).